A 235-amino-acid polypeptide reads, in one-letter code: MKKLSKRMAALSTKIEDRIYAPLEALSIIKENANAKFDETIEAHIRLGIDPKYTDQQLRTTVALPHGTGQSIKIAVITSGENVSKAKAAGADLFGEEDLVESINKGNMEFDLLIATPDMMPKVAKLGRVLGPRGLMPNPKAGTVTNDIANAIKEFKAGKLEFRADKAGIVHVRFGKASFTKEALFDNLKTLQESIDKNKPSGAKGKYWKTFYVTSTMGPSVQVDINAVQDYQPEG.

This sequence belongs to the universal ribosomal protein uL1 family. Part of the 50S ribosomal subunit.

Functionally, binds directly to 23S rRNA. The L1 stalk is quite mobile in the ribosome, and is involved in E site tRNA release. Its function is as follows. Protein L1 is also a translational repressor protein, it controls the translation of the L11 operon by binding to its mRNA. In Prochlorococcus marinus (strain MIT 9301), this protein is Large ribosomal subunit protein uL1.